The chain runs to 952 residues: Valine--tRNA ligase (952 aa).

The short motif at 42–52 (PNVTGSLHMGH) is the 'HIGH' region element. The 'KMSKS' region signature appears at 554-558 (KMSKS). ATP is bound at residue Lys557. Residues 888-952 (AELARLDGEI…EEQKKTIAAL (65 aa)) adopt a coiled-coil conformation.

This sequence belongs to the class-I aminoacyl-tRNA synthetase family. ValS type 1 subfamily. Monomer.

Its subcellular location is the cytoplasm. The catalysed reaction is tRNA(Val) + L-valine + ATP = L-valyl-tRNA(Val) + AMP + diphosphate. Functionally, catalyzes the attachment of valine to tRNA(Val). As ValRS can inadvertently accommodate and process structurally similar amino acids such as threonine, to avoid such errors, it has a 'posttransfer' editing activity that hydrolyzes mischarged Thr-tRNA(Val) in a tRNA-dependent manner. The sequence is that of Valine--tRNA ligase from Vibrio parahaemolyticus serotype O3:K6 (strain RIMD 2210633).